The chain runs to 445 residues: Phosphoglucosamine mutase 1 (445 aa).

Ser-102 (phosphoserine intermediate) is an active-site residue. 4 residues coordinate Mg(2+): Ser-102, Asp-241, Asp-243, and Asp-245. The residue at position 102 (Ser-102) is a Phosphoserine.

This sequence belongs to the phosphohexose mutase family. It depends on Mg(2+) as a cofactor. Post-translationally, activated by phosphorylation.

It catalyses the reaction alpha-D-glucosamine 1-phosphate = D-glucosamine 6-phosphate. Catalyzes the conversion of glucosamine-6-phosphate to glucosamine-1-phosphate. The sequence is that of Phosphoglucosamine mutase 1 from Shewanella baltica (strain OS185).